A 505-amino-acid polypeptide reads, in one-letter code: Activin receptor type-1B (505 aa).

The signal sequence occupies residues 1 to 23 (MAESAGASSFFPLVVLLLAGSGG). Residues 24–126 (SGPRGVQALL…EHPSMWGPVE (103 aa)) are Extracellular-facing. N-linked (GlcNAc...) asparagine glycosylation is present at Asn-43. Residues 127–149 (LVGIIAGPVFLLFLIIIIVFLVI) traverse the membrane as a helical segment. The Cytoplasmic portion of the chain corresponds to 150-505 (NYHQRVYHNR…QLSVQEDVKI (356 aa)). The 30-residue stretch at 177–206 (KTLQDLVYDLSTSGSGSGLPLFVQRTVART) folds into the GS domain. Residues 207 to 497 (IVLQEIIGKG…LRIKKTLSQL (291 aa)) enclose the Protein kinase domain. ATP is bound by residues 213 to 221 (IGKGRFGEV) and Lys-234. Asp-335 (proton acceptor) is an active-site residue. The residue at position 380 (Tyr-380) is a Phosphotyrosine.

The protein belongs to the protein kinase superfamily. TKL Ser/Thr protein kinase family. TGFB receptor subfamily. In terms of assembly, forms an activin receptor complex with activin receptor type-2 (ACVR2A or ACVR2B). Part of a complex consisting of MAGI2/ARIP1, ACVR2A, ACVR1B and SMAD3. Interacts with SMAD2 and SMAD3. Interacts with SMAD7. Interacts with FKBP1A. Interacts with IGSF1. Interacts with CRIPTO. Interacts with TDP2. Interacts with TSC22D1/TSC-22. Mg(2+) serves as cofactor. Mn(2+) is required as a cofactor. Post-translationally, autophosphorylated. Phosphorylated by activin receptor type-2 (ACVR2A or ACVR2B) in response to activin-binding at serine and threonine residues in the GS domain. Phosphorylation of ACVR1B by activin receptor type-2 regulates association with SMAD7. In terms of processing, ubiquitinated. Level of ubiquitination is regulated by the SMAD7-SMURF1 complex. Ubiquitinated. As to expression, expressed in many tissues, most strongly in kidney, pancreas, brain, lung, and liver.

The protein localises to the cell membrane. It catalyses the reaction L-threonyl-[receptor-protein] + ATP = O-phospho-L-threonyl-[receptor-protein] + ADP + H(+). The enzyme catalyses L-seryl-[receptor-protein] + ATP = O-phospho-L-seryl-[receptor-protein] + ADP + H(+). Activin receptor type-2 (ACVR2A or ACVR2B) activates the type-1 receptor through phosphorylation of its regulatory GS domain. Its function is as follows. Transmembrane serine/threonine kinase activin type-1 receptor forming an activin receptor complex with activin receptor type-2 (ACVR2A or ACVR2B). Transduces the activin signal from the cell surface to the cytoplasm and is thus regulating a many physiological and pathological processes including neuronal differentiation and neuronal survival, hair follicle development and cycling, FSH production by the pituitary gland, wound healing, extracellular matrix production, immunosuppression and carcinogenesis. Activin is also thought to have a paracrine or autocrine role in follicular development in the ovary. Within the receptor complex, type-2 receptors (ACVR2A and/or ACVR2B) act as a primary activin receptors whereas the type-1 receptors like ACVR1B act as downstream transducers of activin signals. Activin binds to type-2 receptor at the plasma membrane and activates its serine-threonine kinase. The activated receptor type-2 then phosphorylates and activates the type-1 receptor such as ACVR1B. Once activated, the type-1 receptor binds and phosphorylates the SMAD proteins SMAD2 and SMAD3, on serine residues of the C-terminal tail. Soon after their association with the activin receptor and subsequent phosphorylation, SMAD2 and SMAD3 are released into the cytoplasm where they interact with the common partner SMAD4. This SMAD complex translocates into the nucleus where it mediates activin-induced transcription. Inhibitory SMAD7, which is recruited to ACVR1B through FKBP1A, can prevent the association of SMAD2 and SMAD3 with the activin receptor complex, thereby blocking the activin signal. Activin signal transduction is also antagonized by the binding to the receptor of inhibin-B via the IGSF1 inhibin coreceptor. ACVR1B also phosphorylates TDP2. This chain is Activin receptor type-1B (ACVR1B), found in Homo sapiens (Human).